A 344-amino-acid chain; its full sequence is tRNA N6-adenosine threonylcarbamoyltransferase (344 aa).

Residues His-112 and His-116 each contribute to the Fe cation site. Residues 134-138 (LASGG), Asp-167, Gly-180, and Asn-280 contribute to the substrate site. A Fe cation-binding site is contributed by Asp-308.

The protein belongs to the KAE1 / TsaD family. Fe(2+) is required as a cofactor.

The protein resides in the cytoplasm. It catalyses the reaction L-threonylcarbamoyladenylate + adenosine(37) in tRNA = N(6)-L-threonylcarbamoyladenosine(37) in tRNA + AMP + H(+). Its function is as follows. Required for the formation of a threonylcarbamoyl group on adenosine at position 37 (t(6)A37) in tRNAs that read codons beginning with adenine. Is involved in the transfer of the threonylcarbamoyl moiety of threonylcarbamoyl-AMP (TC-AMP) to the N6 group of A37, together with TsaE and TsaB. TsaD likely plays a direct catalytic role in this reaction. The chain is tRNA N6-adenosine threonylcarbamoyltransferase from Rickettsia rickettsii (strain Iowa).